Consider the following 911-residue polypeptide: Epithelial discoidin domain-containing receptor 1 (911 aa).

The N-terminal stretch at 1–19 (MGTGTLSSLLLLLLLVTIG) is a signal peptide. Over 22-415 (DMKGHFDPAK…VAKAEGSPTA (394 aa)) the chain is Extracellular. The 155-residue stretch at 32-186 (CRYALGMQDR…VCLRVELYGC (155 aa)) folds into the F5/8 type C domain. Cystine bridges form between Cys32–Cys186 and Cys75–Cys178. The tract at residues 193–369 (LSYTAPVGQT…LFSEISFISD (177 aa)) is DS-like domain. Ca(2+) is bound by residues Asn213, Gln232, Asp235, Val237, Tyr255, and Tyr257. The N-linked (GlcNAc...) asparagine glycan is linked to Asn213. A glycan (N-linked (GlcNAc...) asparagine) is linked at Asn262. An intrachain disulfide couples Cys305 to Cys350. Ser362 and Glu363 together coordinate Ca(2+). Residues Asn372 and Asn392 are each glycosylated (N-linked (GlcNAc...) asparagine). The chain crosses the membrane as a helical span at residues 416 to 436 (ILIGCLVAIILLLLLIIALML). The Cytoplasmic portion of the chain corresponds to 437–911 (WRLHWRRLLS…FLADDALNTV (475 aa)). The tract at residues 468-496 (ILINNRPGPREPPPYQEPRPRGTPPHSAP) is disordered. Over residues 477 to 494 (REPPPYQEPRPRGTPPHS) the composition is skewed to pro residues. Residues 479-482 (PPPY) carry the PPxY motif motif. Tyr482, Tyr511, and Tyr518 each carry phosphotyrosine; by autocatalysis. Residues 608–903 (LRFKEKLGEG…PPFAQLHRFL (296 aa)) form the Protein kinase domain. ATP-binding positions include 614–622 (LGEGQFGEV) and Lys653. The residue at position 738 (Tyr738) is a Phosphotyrosine; by autocatalysis. Asp764 (proton acceptor) is an active-site residue. Tyr790, Tyr794, and Tyr795 each carry phosphotyrosine; by autocatalysis.

The protein belongs to the protein kinase superfamily. Tyr protein kinase family. Insulin receptor subfamily. Homodimer. Interacts (via PPxY motif) with WWC1 (via WW domains) in a collagen-regulated manner. Forms a tripartite complex with WWC1 and PRKCZ, but predominantly in the absence of collagen. Interacts (tyrosine phosphorylated) with SHC1. Interacts with SRC. Interacts with MYH9. Interacts with CDH1. Interacts with PTPN11. Interacts with NCK2. Post-translationally, autophosphorylated in response to fibrillar collagen binding. Detected in the cochlea and the organ of Corti in the inner ear. Isoform 1 is predominant and is expressed in developing embryo and adult brain. Isoform 2 is expressed in various epithelial cells.

The protein localises to the cell membrane. It carries out the reaction L-tyrosyl-[protein] + ATP = O-phospho-L-tyrosyl-[protein] + ADP + H(+). Its function is as follows. Tyrosine kinase that functions as a cell surface receptor for fibrillar collagen and regulates cell attachment to the extracellular matrix, remodeling of the extracellular matrix, cell migration, differentiation, survival and cell proliferation. Collagen binding triggers a signaling pathway that involves SRC and leads to the activation of MAP kinases. Regulates remodeling of the extracellular matrix by up-regulation of the matrix metalloproteinases MMP2, MMP7 and MMP9, and thereby facilitates cell migration and wound healing, but also tumor cell invasion. Promotes smooth muscle cell migration, and thereby contributes to arterial wound healing. Phosphorylates PTPN11. Required for normal blastocyst implantation during pregnancy, for normal mammary gland differentiation and normal lactation. Required for normal ear morphology and normal hearing. In Mus musculus (Mouse), this protein is Epithelial discoidin domain-containing receptor 1 (Ddr1).